Reading from the N-terminus, the 344-residue chain is Methionine import ATP-binding protein MetN (344 aa).

The ABC transporter domain occupies Ile2–Ile241. Gly38 to Ser45 serves as a coordination point for ATP.

This sequence belongs to the ABC transporter superfamily. Methionine importer (TC 3.A.1.24) family. As to quaternary structure, the complex is composed of two ATP-binding proteins (MetN), two transmembrane proteins (MetI) and a solute-binding protein (MetQ).

The protein localises to the cell inner membrane. The enzyme catalyses L-methionine(out) + ATP + H2O = L-methionine(in) + ADP + phosphate + H(+). It catalyses the reaction D-methionine(out) + ATP + H2O = D-methionine(in) + ADP + phosphate + H(+). Part of the ABC transporter complex MetNIQ involved in methionine import. Responsible for energy coupling to the transport system. The sequence is that of Methionine import ATP-binding protein MetN from Vibrio cholerae serotype O1 (strain ATCC 39315 / El Tor Inaba N16961).